The primary structure comprises 315 residues: Kinetochore protein SPC25 homolog (315 aa).

The residue at position 1 (Met-1) is an N-acetylmethionine. Residues 57-91 (TAQSQVELMNLKADLREAEDELVKVLAVKTRKEAR) are a coiled coil. A disordered region spans residues 261-315 (APAISFSTDTNMSTPENKRSKVQVNRRQKRGSESPLLAPVSTSATRRSSRFKGKK). Residues 266–275 (FSTDTNMSTP) show a composition bias toward polar residues. Basic residues predominate over residues 280–289 (SKVQVNRRQK).

This sequence belongs to the SPC25 family. In terms of assembly, component of the NDC80 complex, which consists of NDC80, NUF2, SPC24 and SPC25.

Its subcellular location is the chromosome. The protein resides in the centromere. Acts as a component of the essential kinetochore-associated NDC80 complex, which is required for chromosome segregation and spindle checkpoint activity to ensure proper cell division. The sequence is that of Kinetochore protein SPC25 homolog from Arabidopsis thaliana (Mouse-ear cress).